Reading from the N-terminus, the 159-residue chain is uncharacterized protein (159 aa).

One can recognise an N-acetyltransferase domain in the interval 4-153; that stretch reads IKTDDLTHPA…HSRFLSLTLC (150 aa).

This sequence belongs to the acetyltransferase family.

This is an uncharacterized protein from Escherichia coli (strain K12).